Consider the following 610-residue polypeptide: MADDEQFSLCWNNFNTNLSAGFHESLCRGDLVDVSLAAEGQIVKAHRLVLSVCSPFFRKMFTQMPSNTHAIVFLNNVSHSALKDLIQFMYCGEVNVKQDALPAFISTAESLQIKGLTDNDPAPQPPQESSPPPAAPHVQQQQIPAQRVQRQQPRASARYKIETVDDGLGDEKQSTTQIVIQTTAAPQATIVQQQQPQQAAQQIQSQQLQTGTTTTATLVSTNKRSAQRSSLTPASSSAGVKRSKTSTSANVMDPLDSTTETGATTTAQLVPQQITVQTSVVSAAEAKLHQQSPQQVRQEEAEYIDLPMELPTKSEPDYSEDHGDAAGDAEGTYVEDDTYGDMRYDDSYFTENEDAGNQTAANTSGGGVTATTSKAVVKQQSQNYSESSFVDTSGDQGNTEAQAATSASATKIPPRKRGRPKTKVEDQTPKPKLLEKLQAATLNEEASEPAVYASTTKGGVKLIFNGHLFKFSFRKADYSVFQCCYREHGEECKVRVVCDQKRVFPYEGEHVHFMQASDKSCLPSQFMPGESGVISSLSPSKELLMKNTTKLEEADDKEDEDFEEFEIQEIDEIELDEPEKTPAKEEEVDPNDFREKIKRRLQKALQNKKK.

Positions 1–160 are self-association; that stretch reads MADDEQFSLC…QQPRASARYK (160 aa). An interaction with Chi region spans residues 1 to 308; that stretch reads MADDEQFSLC…EEAEYIDLPM (308 aa). Residues 32–98 enclose the BTB domain; the sequence is VDVSLAAEGQ…MYCGEVNVKQ (67 aa). 4 disordered regions span residues 115 to 156, 219 to 259, 311 to 339, and 386 to 432; these read GLTD…PRAS, VSTN…DSTT, PTKS…DDTY, and ESSF…PKPK. A compositionally biased stretch (pro residues) spans 122–135; the sequence is APQPPQESSPPPAA. Residues 136–156 are compositionally biased toward low complexity; that stretch reads PHVQQQQIPAQRVQRQQPRAS. Over residues 222 to 238 the composition is skewed to polar residues; it reads NKRSAQRSSLTPASSSA. Ser-230 carries the phosphoserine modification. Basic and acidic residues predominate over residues 312–325; it reads TKSEPDYSEDHGDA. The span at 386-400 shows a compositional bias: polar residues; sequence ESSFVDTSGDQGNTE. The span at 401 to 410 shows a compositional bias: low complexity; it reads AQAATSASAT. Residues 422 to 432 show a composition bias toward basic and acidic residues; sequence TKVEDQTPKPK. The FLYWCH-type zinc finger occupies 452 to 512; the sequence is YASTTKGGVK…VFPYEGEHVH (61 aa). The interaction with su(Hw) stretch occupies residues 551–610; the sequence is LEEADDKEDEDFEEFEIQEIDEIELDEPEKTPAKEEEVDPNDFREKIKRRLQKALQNKKK. The segment covering 567–577 has biased composition (acidic residues); sequence IQEIDEIELDE. The segment at 567-595 is disordered; the sequence is IQEIDEIELDEPEKTPAKEEEVDPNDFRE. The segment covering 578 to 595 has biased composition (basic and acidic residues); that stretch reads PEKTPAKEEEVDPNDFRE.

In terms of assembly, can self-associate. Interacts with Chi. Interacts with Top2. Isoform mod2.2: Component of the gypsy chromatin insulator complex, composed of Cp190, mod(mdg4) and su(Hw). The gypsy chromatin insulator complex interacts with Topors via mod(mdg4) and su(Hw). Isoform mod2.2 interacts with Trl/GAGA and interaction with this protein may bypass the repressive effects of the su(Hw) insulator.

The protein localises to the nucleus. The protein resides in the chromosome. Component of the gypsy chromatin insulator complex which is required for the function of the gypsy chromatin insulator and other endogenous chromatin insulators. Chromatin insulators are regulatory elements which establish independent domains of transcriptional activity within eukaryotic genomes. Insulators have two defining properties; they can block the communication between an enhancer and a promoter when placed between them and can also buffer transgenes from position effect variegation (PEV). Insulators are proposed to structure the chromatin fiber into independent domains of differing transcriptional potential by promoting the formation of distinct chromatin loops. This chromatin looping may involve the formation of insulator bodies, where homotypic interactions between individual subunits of the insulator complex could promote the clustering of widely spaced insulators at the nuclear periphery. Within the gypsy insulator complex, this protein may control the nature of the repressive effect of su(Hw): in the absence of mod(mdg4) protein, su(Hw) exerts a bidirectional silencing effect, whereas in the presence of mod(mdg4), the silencing effect is unidirectional. Isoform H is specifically required to maintain the pairing of achiasmate homologs in male meiosis I which is mediated by the rDNA repeats on the achiasmate X-Y bivalents. Isoform H also plays a role in apoptotic regulatory pathways. In Drosophila melanogaster (Fruit fly), this protein is Modifier of mdg4.